Reading from the N-terminus, the 166-residue chain is Protein phosphatase 1 regulatory subunit 1A (166 aa).

Methionine 1 is subject to N-acetylmethionine. The interval 1-166 (MEQDNSPRKI…SQDSQGASAV (166 aa)) is disordered. The essential for activity stretch occupies residues 9–12 (KIQF). Over residues 19–29 (PHLDPEAAEQI) the composition is skewed to basic and acidic residues. A Phosphothreonine; by PKA modification is found at threonine 35. The tract at residues 42 to 54 (TSDQSSPEVDEDR) is essential for activity. 4 positions are modified to phosphoserine: serine 43, serine 46, serine 47, and serine 67. Positions 104-114 (AAEGTGAQESQ) are enriched in low complexity. Over residues 143 to 152 (AQERRGEEPS) the composition is skewed to basic and acidic residues. The interval 143 to 166 (AQERRGEEPSTAKTSQDSQGASAV) is interaction with PPP1R15A. The segment covering 153–166 (TAKTSQDSQGASAV) has biased composition (polar residues).

This sequence belongs to the protein phosphatase inhibitor 1 family. As to quaternary structure, interacts with PPP1R15A. Post-translationally, phosphorylation of Thr-35 is required for activity.

Inhibitor of protein-phosphatase 1. This protein may be important in hormonal control of glycogen metabolism. Hormones that elevate intracellular cAMP increase I-1 activity in many tissues. I-1 activation may impose cAMP control over proteins that are not directly phosphorylated by PKA. Following a rise in intracellular calcium, I-1 is inactivated by calcineurin (or PP2B). Does not inhibit type-2 phosphatases. In Oryctolagus cuniculus (Rabbit), this protein is Protein phosphatase 1 regulatory subunit 1A (PPP1R1A).